A 191-amino-acid polypeptide reads, in one-letter code: MRGVVGVLALQGDFREHKEALKRLGIEAKEVRKVKDLEGLKALIVPGGESTTIGKLAREYGLEEAVRRRVEEGTLALFGTCAGAIWLAREILGYPEQPRLGVLDAAVERNAFGRQVESFEEDLEVEGLGPFHGVFIRAPVFRRLGEGVEVLARLGDLPVLVRQGKVLASSFHPELTEDPRLHRYFLELAGV.

48 to 50 (GES) contributes to the L-glutamine binding site. Cys81 (nucleophile) is an active-site residue. Residues Arg109 and 136–137 (IR) each bind L-glutamine. Catalysis depends on charge relay system residues His172 and Glu174.

This sequence belongs to the glutaminase PdxT/SNO family. In terms of assembly, in the presence of PdxS, forms a dodecamer of heterodimers. Only shows activity in the heterodimer.

The enzyme catalyses aldehydo-D-ribose 5-phosphate + D-glyceraldehyde 3-phosphate + L-glutamine = pyridoxal 5'-phosphate + L-glutamate + phosphate + 3 H2O + H(+). The catalysed reaction is L-glutamine + H2O = L-glutamate + NH4(+). Its pathway is cofactor biosynthesis; pyridoxal 5'-phosphate biosynthesis. In terms of biological role, catalyzes the hydrolysis of glutamine to glutamate and ammonia as part of the biosynthesis of pyridoxal 5'-phosphate. The resulting ammonia molecule is channeled to the active site of PdxS. This Thermus thermophilus (strain ATCC BAA-163 / DSM 7039 / HB27) protein is Pyridoxal 5'-phosphate synthase subunit PdxT.